Reading from the N-terminus, the 143-residue chain is MAAYLLAVAILFCIQGWPSATVQGQVMPFMEVYERSACQTRETLVSILKEYPDEVAHLFKPSCVPVLRCSGCCSDESLKCTATGKHSVGREVMRVDPHKGTSKIEVMQFKEHTDCECRPRSPGDVNNGRNPEEGEPRARFPFV.

The first 24 residues, 1–24 (MAAYLLAVAILFCIQGWPSATVQG), serve as a signal peptide directing secretion. Position 25 is a pyrrolidone carboxylic acid (Gln-25). Intrachain disulfides connect Cys-38-Cys-80, Cys-69-Cys-115, and Cys-73-Cys-117. Residues 115–143 (CECRPRSPGDVNNGRNPEEGEPRARFPFV) are disordered. Residues 130–143 (NPEEGEPRARFPFV) show a composition bias toward basic and acidic residues.

It belongs to the PDGF/VEGF growth factor family. Snake venom VEGF subfamily. As to quaternary structure, homodimer; disulfide-linked. Interacts with VEGF receptor-2 (KDR). The N-terminus is blocked for N-terminal sequencing, suggesting a Pyrrolidone carboxylic acid at Gln-25. As to expression, expressed by the venom gland.

Its subcellular location is the secreted. Snake venom VEGFs that may contribute to venom dispersion and prey subjugation by inducing vascular permeability and hypotension. This protein induces an increase in capillary permeability when intradermally injected into mice. Also provokes a drastic hypotensive effect after intravenous injection. The hypotension is mediated by nitric oxide (NO), which is produced by VEGF-activated endothelium NO synthase. Also induces angiogenesis in vitro. Unlike other crotalid VEGFs, this protein interacts with VEGF receptor-2 (KDR) with a high affinity (Kd=413 pM), whereas no interaction is detected with VEGF receptor-1 (FLT1). This Protobothrops jerdonii (Jerdon's pitviper) protein is Snake venom vascular endothelial growth factor toxin.